Consider the following 339-residue polypeptide: Phosphate acyltransferase (339 aa).

Belongs to the PlsX family. As to quaternary structure, homodimer. Probably interacts with PlsY.

It is found in the cytoplasm. The enzyme catalyses a fatty acyl-[ACP] + phosphate = an acyl phosphate + holo-[ACP]. It participates in lipid metabolism; phospholipid metabolism. Catalyzes the reversible formation of acyl-phosphate (acyl-PO(4)) from acyl-[acyl-carrier-protein] (acyl-ACP). This enzyme utilizes acyl-ACP as fatty acyl donor, but not acyl-CoA. This chain is Phosphate acyltransferase, found in Clostridium perfringens (strain ATCC 13124 / DSM 756 / JCM 1290 / NCIMB 6125 / NCTC 8237 / Type A).